The sequence spans 2615 residues: Probable serine/threonine-protein kinase roco7 (2615 aa).

Residues 1 to 13 are compositionally biased toward low complexity; sequence MDGYSSLSSSGNS. Disordered regions lie at residues 1–35, 275–297, 533–623, and 946–998; these read MDGY…NYNQ, STPT…NSNN, QNIN…GGLN, and SSSS…ISEQ. 3 stretches are compositionally biased toward low complexity: residues 533-560, 567-614, and 946-996; these read QNIN…SSRS, NSST…NNNN, and SSSS…SNIS. The 191-residue stretch at 1441-1631 folds into the COR domain; that stretch reads SVKEAYARNK…LCIWQNGMVL (191 aa). The region spanning 1775–2042 is the Protein kinase domain; the sequence is LKFGPQLGSG…ERLSTMQKTF (268 aa). ATP-binding positions include 1781 to 1789 and Lys-1802; that span reads LGSGSYANV. Asp-1899 serves as the catalytic Proton acceptor. Disordered regions lie at residues 2061-2158 and 2176-2209; these read QINQ…SHSG and GIGS…YESG. Composition is skewed to low complexity over residues 2073–2158 and 2182–2209; these read SQAA…SHSG and NQHQ…YESG. WD repeat units lie at residues 2491–2527 and 2533–2574; these read GIIK…LVWD and RMVQ…TTYS.

The protein belongs to the protein kinase superfamily. TKL Ser/Thr protein kinase family. ROCO subfamily.

It catalyses the reaction L-seryl-[protein] + ATP = O-phospho-L-seryl-[protein] + ADP + H(+). It carries out the reaction L-threonyl-[protein] + ATP = O-phospho-L-threonyl-[protein] + ADP + H(+). This Dictyostelium discoideum (Social amoeba) protein is Probable serine/threonine-protein kinase roco7 (roco7).